The sequence spans 282 residues: 2-dehydro-3-deoxyphosphooctonate aldolase (282 aa).

This sequence belongs to the KdsA family.

It is found in the cytoplasm. It carries out the reaction D-arabinose 5-phosphate + phosphoenolpyruvate + H2O = 3-deoxy-alpha-D-manno-2-octulosonate-8-phosphate + phosphate. The protein operates within carbohydrate biosynthesis; 3-deoxy-D-manno-octulosonate biosynthesis; 3-deoxy-D-manno-octulosonate from D-ribulose 5-phosphate: step 2/3. It participates in bacterial outer membrane biogenesis; lipopolysaccharide biosynthesis. The chain is 2-dehydro-3-deoxyphosphooctonate aldolase from Granulibacter bethesdensis (strain ATCC BAA-1260 / CGDNIH1).